The primary structure comprises 94 residues: Pyrimidine/purine nucleoside phosphorylase (94 aa).

Belongs to the nucleoside phosphorylase PpnP family.

The catalysed reaction is a purine D-ribonucleoside + phosphate = a purine nucleobase + alpha-D-ribose 1-phosphate. It catalyses the reaction adenosine + phosphate = alpha-D-ribose 1-phosphate + adenine. It carries out the reaction cytidine + phosphate = cytosine + alpha-D-ribose 1-phosphate. The enzyme catalyses guanosine + phosphate = alpha-D-ribose 1-phosphate + guanine. The catalysed reaction is inosine + phosphate = alpha-D-ribose 1-phosphate + hypoxanthine. It catalyses the reaction thymidine + phosphate = 2-deoxy-alpha-D-ribose 1-phosphate + thymine. It carries out the reaction uridine + phosphate = alpha-D-ribose 1-phosphate + uracil. The enzyme catalyses xanthosine + phosphate = alpha-D-ribose 1-phosphate + xanthine. Its function is as follows. Catalyzes the phosphorolysis of diverse nucleosides, yielding D-ribose 1-phosphate and the respective free bases. Can use uridine, adenosine, guanosine, cytidine, thymidine, inosine and xanthosine as substrates. Also catalyzes the reverse reactions. This Pectobacterium carotovorum subsp. carotovorum (strain PC1) protein is Pyrimidine/purine nucleoside phosphorylase.